The chain runs to 249 residues: Neurotrophic factor BDNF precursor form (249 aa).

The first 18 residues, 1 to 18 (MTILFLTMVISYFGCMKA), serve as a signal peptide directing secretion. Residues 19–130 (APMKEVNVHG…AANMSMRVRR (112 aa)) constitute a propeptide that is removed on maturation. Asn123 carries an N-linked (GlcNAc...) asparagine glycan. 3 cysteine pairs are disulfide-bonded: Cys143–Cys210, Cys188–Cys239, and Cys198–Cys241.

Belongs to the NGF-beta family. In terms of assembly, monomers and homodimers. Binds to NTRK2/TRKB. Can form heterodimers with other neurotrophin family members, such as NTF3 and NTF4 (in vitro), but the physiological relevance of this is not clear. BDNF precursor form: interacts with the heterodimer formed by NGFR and SORCS2. Mature BDNF has much lower affinity for the heterodimer formed by NGFR and SORCS2. In terms of processing, N-glycosylated and glycosulfated, contrary to mature BDNF. Mature BDNF is produced by proteolytic removal of the propeptide, catalyzed by a FURIN family member. In addition, the precursor form is proteolytically cleaved within the propeptide, but this is not an obligatory intermediate for the production of mature BDNF. Can be converted into mature BDNF by plasmin (PLG). In terms of tissue distribution, expressed in the dorsal root ganglion and the spinal cord (at protein level). Detected in brain, especially in brain cortex, hippocampus, midbrain and cerebellum.

It is found in the secreted. Its function is as follows. Important signaling molecule that activates signaling cascades downstream of NTRK2. During development, promotes the survival and differentiation of selected neuronal populations of the peripheral and central nervous systems. Participates in axonal growth, pathfinding and in the modulation of dendritic growth and morphology. Major regulator of synaptic transmission and plasticity at adult synapses in many regions of the CNS. The versatility of BDNF is emphasized by its contribution to a range of adaptive neuronal responses including long-term potentiation (LTP), long-term depression (LTD), certain forms of short-term synaptic plasticity, as well as homeostatic regulation of intrinsic neuronal excitability. Functionally, important signaling molecule that activates signaling cascades downstream of NTRK2. Activates signaling cascades via the heterodimeric receptor formed by NGFR and SORCS2. Signaling via NGFR and SORCS2 plays a role in synaptic plasticity and long-term depression (LTD). Binding to NGFR and SORCS2 promotes neuronal apoptosis. Promotes neuronal growth cone collapse. This is Neurotrophic factor BDNF precursor form (Bdnf) from Mus musculus (Mouse).